Reading from the N-terminus, the 371-residue chain is MKMTFRWFGKEHDTVSLDHIRQIPGVEGIVGALYHIPVGEVWPLDDILELKRQVNEKGFHLEVIESVNVHEDIKLGLPSRDRYIENYKQTIRNLAKAGVKVICYNFMPIFDWTRSDLAKRRPDGSTVLAYEKQKIEQIDPEEMIRRIESGANGFLLPGWEPERLKTIKPLFSLYKGVTEEDLFDHLRYFLEQIVPVAEECGVRMALHPDDPPWSVFGLPRIATNKENLDRIVHMVNSPANGLTLCSGSLGANPANDVPDIFRHFLRMGRVPFAHVRNVEIHANGDFEETSHRSCDGSLNICEIMKALHEANFQGYIRPDHGRMIWGEQARPGYGLYDRALGIMYLLGIWDSLENEKKKQEGEKTCSRSIQV.

This sequence belongs to the mannonate dehydratase family. Fe(2+) serves as cofactor. Requires Mn(2+) as cofactor.

The catalysed reaction is D-mannonate = 2-dehydro-3-deoxy-D-gluconate + H2O. It functions in the pathway carbohydrate metabolism; pentose and glucuronate interconversion. Its function is as follows. Catalyzes the dehydration of D-mannonate. The protein is Mannonate dehydratase (uxuA) of Geobacillus stearothermophilus (Bacillus stearothermophilus).